The following is a 200-amino-acid chain: Peptidyl-tRNA hydrolase (200 aa).

Tyr14 contributes to the tRNA binding site. The active-site Proton acceptor is His19. Phe64, Asn66, and Asn112 together coordinate tRNA.

The protein belongs to the PTH family. In terms of assembly, monomer.

Its subcellular location is the cytoplasm. It catalyses the reaction an N-acyl-L-alpha-aminoacyl-tRNA + H2O = an N-acyl-L-amino acid + a tRNA + H(+). Hydrolyzes ribosome-free peptidyl-tRNAs (with 1 or more amino acids incorporated), which drop off the ribosome during protein synthesis, or as a result of ribosome stalling. Functionally, catalyzes the release of premature peptidyl moieties from peptidyl-tRNA molecules trapped in stalled 50S ribosomal subunits, and thus maintains levels of free tRNAs and 50S ribosomes. In Maricaulis maris (strain MCS10) (Caulobacter maris), this protein is Peptidyl-tRNA hydrolase.